The following is a 198-amino-acid chain: dITP/XTP pyrophosphatase (198 aa).

Position 9 to 14 (9 to 14 (SNNAKK)) interacts with substrate. Mg(2+) contacts are provided by aspartate 41 and aspartate 70. The Proton acceptor role is filled by aspartate 70. Substrate is bound by residues serine 71, 153–156 (FGYD), lysine 176, and 181–182 (HR).

Belongs to the HAM1 NTPase family. In terms of assembly, homodimer. Requires Mg(2+) as cofactor.

The enzyme catalyses XTP + H2O = XMP + diphosphate + H(+). The catalysed reaction is dITP + H2O = dIMP + diphosphate + H(+). It carries out the reaction ITP + H2O = IMP + diphosphate + H(+). Functionally, pyrophosphatase that catalyzes the hydrolysis of nucleoside triphosphates to their monophosphate derivatives, with a high preference for the non-canonical purine nucleotides XTP (xanthosine triphosphate), dITP (deoxyinosine triphosphate) and ITP. Seems to function as a house-cleaning enzyme that removes non-canonical purine nucleotides from the nucleotide pool, thus preventing their incorporation into DNA/RNA and avoiding chromosomal lesions. The polypeptide is dITP/XTP pyrophosphatase (Aromatoleum aromaticum (strain DSM 19018 / LMG 30748 / EbN1) (Azoarcus sp. (strain EbN1))).